We begin with the raw amino-acid sequence, 251 residues long: Protein FAM216A (251 aa).

The segment covering 1–16 (MPNQGPVSDWTECSSS) has biased composition (polar residues). Residues 1–49 (MPNQGPVSDWTECSSSAEPPAVARAEGGGGGSAGHSYYQNSKDRIKDGH) are disordered.

Belongs to the FAM216 family.

This chain is Protein FAM216A (FAM216A), found in Bos taurus (Bovine).